Here is a 468-residue protein sequence, read N- to C-terminus: 6-phospho-beta-galactosidase (468 aa).

D-galactose 6-phosphate contacts are provided by Q19, H116, N159, E160, and N297. E160 (proton donor) is an active-site residue. The active-site Nucleophile is E375. Residues S428, W429, K435, and Y437 each coordinate D-galactose 6-phosphate.

Belongs to the glycosyl hydrolase 1 family.

It catalyses the reaction a 6-phospho-beta-D-galactoside + H2O = D-galactose 6-phosphate + an alcohol. It functions in the pathway carbohydrate metabolism; lactose degradation; D-galactose 6-phosphate and beta-D-glucose from lactose 6-phosphate: step 1/1. The chain is 6-phospho-beta-galactosidase from Lactococcus lactis subsp. lactis (Streptococcus lactis).